Here is a 314-residue protein sequence, read N- to C-terminus: UDP-N-acetylenolpyruvoylglucosamine reductase (314 aa).

An FAD-binding PCMH-type domain is found at 27–192 (KIGGKARYIV…LRAVFCLKFA (166 aa)). The active site involves R171. The Proton donor role is filled by S223. Residue E293 is part of the active site.

It belongs to the MurB family. Requires FAD as cofactor.

The protein localises to the cytoplasm. It catalyses the reaction UDP-N-acetyl-alpha-D-muramate + NADP(+) = UDP-N-acetyl-3-O-(1-carboxyvinyl)-alpha-D-glucosamine + NADPH + H(+). It functions in the pathway cell wall biogenesis; peptidoglycan biosynthesis. Its function is as follows. Cell wall formation. The chain is UDP-N-acetylenolpyruvoylglucosamine reductase from Caldicellulosiruptor bescii (strain ATCC BAA-1888 / DSM 6725 / KCTC 15123 / Z-1320) (Anaerocellum thermophilum).